The sequence spans 133 residues: Small ribosomal subunit protein eS8 (133 aa).

Residues 1–34 form a disordered region; that stretch reads MGVWHGRSLRKPTGGRIRPHRKKRKFEMGNPPTE.

Belongs to the eukaryotic ribosomal protein eS8 family. In terms of assembly, part of the 30S ribosomal subunit.

The sequence is that of Small ribosomal subunit protein eS8 from Methanopyrus kandleri (strain AV19 / DSM 6324 / JCM 9639 / NBRC 100938).